The chain runs to 115 residues: uncharacterized protein (115 aa).

An N-terminal signal peptide occupies residues 1–24; sequence MLPLCLTFLSFFLSLGGSFKAVMT. 2 consecutive transmembrane segments (helical) span residues 39–59 and 93–113; these read FWIF…ALAI and YLTS…FLLS.

The protein localises to the membrane. This is an uncharacterized protein from Saccharomyces cerevisiae (strain ATCC 204508 / S288c) (Baker's yeast).